Reading from the N-terminus, the 173-residue chain is DNA-directed RNA polymerase subunit delta (173 aa).

The HTH HARE-type domain maps to 14 to 81 (MALVEIAHEL…SDQTWGLRSW (68 aa)). A disordered region spans residues 110–173 (LDLDEFEEID…DYDDEEEEIK (64 aa)).

This sequence belongs to the RpoE family. In terms of assembly, RNAP is composed of a core of 2 alpha, a beta and a beta' subunit. The core is associated with a delta subunit, and at least one of epsilon or omega. When a sigma factor is associated with the core the holoenzyme is formed, which can initiate transcription.

In terms of biological role, participates in both the initiation and recycling phases of transcription. In the presence of the delta subunit, RNAP displays an increased specificity of transcription, a decreased affinity for nucleic acids, and an increased efficiency of RNA synthesis because of enhanced recycling. May function in sigma factor switching. It displaces RNA bound to RNA polymerase in a binary complex. The sequence is that of DNA-directed RNA polymerase subunit delta from Bacillus subtilis (strain 168).